A 256-amino-acid polypeptide reads, in one-letter code: MTLPASLKGFETLDIFNISSVRNICELNKHAEHVSIKNLPLIDISVGNDDVWFHLEDGTIVNGKSYKSICEKTLGFLGFIGIILLDSEDTLEEIRLSKTQCKRRIIYLILKEDTEFLLCGIVYALENLPIKGQTLLKLRDIIKKISVTLPVSKLLACTCQKLISILRYIFYDDKQQDVLDKVPPIIQLYYESKTANIHMLNLFFKSHDNDDTCTLSLNTRRLQDDSKYLIDFLKSAICDAFSKEYKMTEIEKTSLH.

Belongs to the herpesviridae cytoplasmic envelopment protein 1 family.

The protein localises to the virion. The protein resides in the virion tegument. It is found in the host cytoplasm. Its subcellular location is the host Golgi apparatus. Its function is as follows. Plays a critical role in cytoplasmic virus egress. Participates in the final step of tegumentation and envelope acquisition within the host cytoplasm. This is Cytoplasmic envelopment protein 1 (U75) from Homo sapiens (Human).